We begin with the raw amino-acid sequence, 1605 residues long: GTPase-activating protein pac-1 (1605 aa).

Residues 1 to 574 (MEEHHRRLHV…QRFIALFNSS (574 aa)) form a required for localization to adherens junctions region. Disordered stretches follow at residues 293–430 (QRHP…ISTS), 529–556 (MRSG…LNAP), and 574–593 (SKTS…RSRT). Residues 323–334 (SKEDPSEDTGHD) are compositionally biased toward basic and acidic residues. Composition is skewed to low complexity over residues 353–365 (RNAS…SSRS), 420–430 (TTSSTSSISTS), and 530–552 (RSGG…TSRS). The PH domain occupies 599-726 (RFALPGTILQ…WISVLQSSSE (128 aa)). Composition is skewed to polar residues over residues 728-745 (GIAT…TTGR) and 846-855 (KNSQLQSPTA). 2 disordered regions span residues 728 to 752 (GIAT…NAVS) and 846 to 942 (KNSQ…AGAP). The segment covering 868-879 (SSSQTMATTSSS) has biased composition (low complexity). A compositionally biased stretch (basic residues) spans 908–917 (SGRKWKKSKA). The segment covering 928-941 (GSSSGSQQQGAAGA) has biased composition (low complexity). Positions 948-1146 (VRIADCPTGS…TLIHYNLWMF (199 aa)) constitute a Rho-GAP domain. 5 disordered regions span residues 1152–1176 (TEDA…YGVG), 1207–1258 (EGKG…AASV), 1277–1339 (SRQT…RRKR), 1438–1533 (TSDY…ARRH), and 1554–1605 (GIRK…DELL). Residues 1211–1229 (QKIKNMLRRNSRRDKSKSK) are compositionally biased toward basic residues. 2 stretches are compositionally biased toward polar residues: residues 1244–1257 (GWTQ…SAAS) and 1278–1300 (RQTV…RLDQ). Low complexity predominate over residues 1301–1312 (SPSLESSLGSLP). Over residues 1438-1453 (TSDYSTTSSAPLSTNP) the composition is skewed to polar residues. Low complexity predominate over residues 1461-1476 (DQPNSSSDYASSDPSP). Composition is skewed to polar residues over residues 1480–1493 (NPST…SNLA) and 1500–1515 (HATS…MSRS). A compositionally biased stretch (basic and acidic residues) spans 1558-1575 (SSPDVSRDEVSDDEKNHQ).

As to quaternary structure, associated with the catenin-cadherin complex consisting of hmr-1, hmp-1 and hmp-2; this is mediated by interaction with picc-1.

It is found in the cytoplasm. The protein localises to the cell junction. The protein resides in the adherens junction. Its function is as follows. GTPase-activating protein for members of the Rho subfamily including Rac1, RhoA and cdc42 and other Ras-related subfamilies including let-60. Mediates radial (inner-outer) polarity and gastrulation by excluding par-6 from contacted cell surfaces; acts by inactivating cdc42 at inner cell surfaces which limits active cdc42 to outer cell surfaces devoid of cell-cell contacts, where cdc42 can bind and recruit par-6. Required for blastomere polarization. The protein is GTPase-activating protein pac-1 (pac-1) of Caenorhabditis elegans.